We begin with the raw amino-acid sequence, 202 residues long: UMP-CMP kinase 3 (202 aa).

ATP is bound at residue 24 to 29; sequence GSGKGT. Positions 44 to 73 are NMP; the sequence is SAGDLLRAEIKSGSENGTMIQNMIKEGKIV. A ribonucleoside 5'-phosphate contacts are provided by residues Arg-50, 71–73, and 98–101; these read KIV and GFPR. Asn-105 provides a ligand contact to CMP. The tract at residues 136–144 is LID; that stretch reads GRNQGREDD. Arg-137 provides a ligand contact to ATP. A ribonucleoside 5'-phosphate is bound by residues Arg-141 and Arg-152. Lys-180 contacts ATP.

In terms of assembly, monomer. Mg(2+) is required as a cofactor.

The protein localises to the cytoplasm. The protein resides in the nucleus. It carries out the reaction CMP + ATP = CDP + ADP. The enzyme catalyses dCMP + ATP = dCDP + ADP. The catalysed reaction is UMP + ATP = UDP + ADP. Its function is as follows. Catalyzes the phosphorylation of pyrimidine nucleoside monophosphates at the expense of ATP. Plays an important role in de novo pyrimidine nucleotide biosynthesis. Has preference for UMP and CMP as phosphate acceptors. Does not act on dCMP and dUMP. The sequence is that of UMP-CMP kinase 3 (UMK3) from Arabidopsis thaliana (Mouse-ear cress).